A 550-amino-acid chain; its full sequence is Arginine--tRNA ligase (550 aa).

Positions 130–140 (ANPTGPIHLGG) match the 'HIGH' region motif.

It belongs to the class-I aminoacyl-tRNA synthetase family. As to quaternary structure, monomer.

Its subcellular location is the cytoplasm. The enzyme catalyses tRNA(Arg) + L-arginine + ATP = L-arginyl-tRNA(Arg) + AMP + diphosphate. This Rhodococcus jostii (strain RHA1) protein is Arginine--tRNA ligase.